A 324-amino-acid polypeptide reads, in one-letter code: MSIYDDIFKQFPMIDEWSDSDEKILVEPYTYLGINTAKELPSMVTKAFNHWYQVPQPALDIILQIIGPIHAASLLLDDIQDDSDLRGGNPVAHKVYGVAQTINTATYVCFDAYHKVSQLTPFLKSPETTDLWSIINDEIAALHRGQGIELYWRDSLMCPTEEEYLRMIHNKTGAIFRLPIKLLQALSSVDSPPDCFPLLNIVGILFQIQNDISSLSPDFTKDKGFCEDFSEGKFSFPIIHSVKADSSNSLLMDILRLRPKDEATKRKALRFMKDQTKSLDHTFHVLCKLKKTAQEELEKLGGNSELSSILERIQVSPTPEIEDR.

Residues Asp-77 and Asp-81 each coordinate Mg(2+).

Belongs to the FPP/GGPP synthase family. The cofactor is Mg(2+).

The enzyme catalyses (2E)-geranyl diphosphate + H2O = linalool + diphosphate. It catalyses the reaction (2E,6E)-farnesyl diphosphate + H2O = (6E)-nerolidol + diphosphate. In terms of biological role, terpene synthase that shows monoterpene synthase activity and produces linalool, using geranyl diphosphate (GPP) as substrate. Also shows sesquiterpene synthase activity as it is able to convert farnesyl diphosphate (FPP) into (E)-nerolidol. This is IDS-like terpene synthase 3 from Melampsora lini (Rust fungus).